The primary structure comprises 219 residues: Adenylate kinase (219 aa).

10–15 is an ATP binding site; the sequence is GAGKGT. The NMP stretch occupies residues 30-59; sequence STGDMLRAAVKAGTPLGQQAKKVMDAGELV. AMP-binding positions include T31, R36, 57 to 59, 85 to 88, and Q92; these read ELV and GFPR. Residues 122 to 159 are LID; the sequence is GRRVHPGSGRVYHVEHNPPKEEGKDDVTGEPLVQRDDD. Residues R123 and 132-133 each bind ATP; that span reads VY. A disordered region spans residues 129 to 152; the sequence is SGRVYHVEHNPPKEEGKDDVTGEP. Residues 133–152 are compositionally biased toward basic and acidic residues; the sequence is YHVEHNPPKEEGKDDVTGEP. AMP is bound by residues R156 and R167. Residue G203 coordinates ATP.

The protein belongs to the adenylate kinase family. As to quaternary structure, monomer.

Its subcellular location is the cytoplasm. It catalyses the reaction AMP + ATP = 2 ADP. It participates in purine metabolism; AMP biosynthesis via salvage pathway; AMP from ADP: step 1/1. Catalyzes the reversible transfer of the terminal phosphate group between ATP and AMP. Plays an important role in cellular energy homeostasis and in adenine nucleotide metabolism. This chain is Adenylate kinase, found in Alkalilimnicola ehrlichii (strain ATCC BAA-1101 / DSM 17681 / MLHE-1).